The primary structure comprises 396 residues: Activity-regulated cytoskeleton-associated protein (396 aa).

The stretch at 54–78 (SKQVERELKGLHRSVGKLENNLDGY) forms a coiled coil. The segment at 89 to 100 (KSIKACLCRCQE) is interaction with SH3GL1 or SH3GL3. Residues 177 to 207 (PPAAGELPEQESVEAQQYQSWGPGEDGQPSP) are disordered. The tract at residues 195-214 (QSWGPGEDGQPSPGVDTQIF) is interaction with DNM2. Serine 260 is modified (phosphoserine; by CaMK2). Glycyl lysine isopeptide (Lys-Gly) (interchain with G-Cter in ubiquitin) cross-links involve residues lysine 268 and lysine 269. Threonine 278 carries the post-translational modification Phosphothreonine. The tract at residues 356–396 (QDGLEQAAEPSGTPLPTEDETEALTPALTSESVASDRTQPE) is disordered. The segment covering 382 to 396 (ALTSESVASDRTQPE) has biased composition (polar residues).

This sequence belongs to the ARC/ARG3.1 family. Homooligomer; homooligomerizes into virion-like capsids. Interacts with SH3GL1/endophilin-2, SH3GL3/endophilin-3 and DNM2/DYN2. Interacts with CAMK2B (in the kinase inactive state); leading to target ARC to inactive synapses. Interacts with PSEN1. Interacts with GRIN2A and GRIN2B; inhibiting homooligomerization. In terms of processing, ubiquitinated by UBE3A, leading to its degradation by the proteasome, thereby promoting AMPA receptors (AMPARs) expression at synapses. Ubiquitinated by RNF216 at Lys-268 and Lys-269 limiting ARC protein levels induced by synaptic activity and thus regulating ARC-dependent forms of synaptic plasticity. Palmitoylation anchors the protein into the membrane by allowing direct insertion into the hydrophobic core of the lipid bilayer. Post-translationally, phosphorylation at Ser-260 by CaMK2 prevents homooligomerization into virion-like capsids by disrupting an interaction surface essential for high-order oligomerization. Phosphorylation by CaMK2 inhibits synaptic activity. Expressed in brain and testis. In primary visual cortex, detected in all cortical layers with the exception of layer 5: present at highest level in layers 2/3 and 4, the predominant sites of ocular dominance plasticity (at protein level). Also expressed in skin-migratory dendritic cells.

It localises to the extracellular vesicle membrane. The protein localises to the postsynaptic cell membrane. It is found in the synapse. Its subcellular location is the postsynaptic density. The protein resides in the early endosome membrane. It localises to the cell projection. The protein localises to the dendrite. It is found in the cytoplasm. Its subcellular location is the cytoskeleton. The protein resides in the cell cortex. It localises to the dendritic spine. The protein localises to the cytoplasmic vesicle. It is found in the secretory vesicle. Its subcellular location is the acrosome. The protein resides in the clathrin-coated vesicle membrane. Master regulator of synaptic plasticity that self-assembles into virion-like capsids that encapsulate RNAs and mediate intercellular RNA transfer in the nervous system. ARC protein is released from neurons in extracellular vesicles that mediate the transfer of ARC mRNA into new target cells, where ARC mRNA can undergo activity-dependent translation. ARC capsids are endocytosed and are able to transfer ARC mRNA into the cytoplasm of neurons. Acts as a key regulator of synaptic plasticity: required for protein synthesis-dependent forms of long-term potentiation (LTP) and depression (LTD) and for the formation of long-term memory. Regulates synaptic plasticity by promoting endocytosis of AMPA receptors (AMPARs) in response to synaptic activity: this endocytic pathway maintains levels of surface AMPARs in response to chronic changes in neuronal activity through synaptic scaling, thereby contributing to neuronal homeostasis. Acts as a postsynaptic mediator of activity-dependent synapse elimination in the developing cerebellum by mediating elimination of surplus climbing fiber synapses. Accumulates at weaker synapses, probably to prevent their undesired enhancement. This suggests that ARC-containing virion-like capsids may be required to eliminate synaptic material. Required to transduce experience into long-lasting changes in visual cortex plasticity and for long-term memory. Involved in postsynaptic trafficking and processing of amyloid-beta A4 (APP) via interaction with PSEN1. In addition to its role in synapses, also involved in the regulation of the immune system: specifically expressed in skin-migratory dendritic cells and regulates fast dendritic cell migration, thereby regulating T-cell activation. The polypeptide is Activity-regulated cytoskeleton-associated protein (Mus musculus (Mouse)).